Here is an 801-residue protein sequence, read N- to C-terminus: Protein SDA1 homolog (801 aa).

Disordered regions lie at residues 1–40 (MGKV…ASRF), 495–517 (RKDR…FARP), 536–647 (GEQG…SKNS), and 739–801 (DYKF…RKPQ). The segment covering 24–40 (KSNAPTEGSNSGKASRF) has biased composition (polar residues). 2 stretches are compositionally biased toward acidic residues: residues 544–568 (DGTD…DADE) and 583–633 (NDAE…EASE). 2 stretches are compositionally biased toward basic residues: residues 770–779 (NKIRGRNRQR) and 787–801 (SLRH…RKPQ).

This sequence belongs to the SDA1 family.

It localises to the nucleus. Functionally, required for 60S pre-ribosomal subunits export to the cytoplasm. Required for normal somatic gonad development and for regulation of germline development and proliferation. The protein is Protein SDA1 homolog (pro-3) of Caenorhabditis elegans.